The primary structure comprises 572 residues: Glypican-5 (572 aa).

A signal peptide spans methionine 1–serine 24. 2 N-linked (GlcNAc...) asparagine glycosylation sites follow: asparagine 120 and asparagine 237. O-linked (Xyl...) (glycosaminoglycan) serine glycosylation is present at serine 486. Asparagine 493 carries an N-linked (GlcNAc...) asparagine glycan. Residues serine 495, serine 507, and serine 509 are each glycosylated (O-linked (Xyl...) (glycosaminoglycan) serine). N-linked (GlcNAc...) asparagine glycosylation occurs at asparagine 527.

This sequence belongs to the glypican family.

The protein resides in the cell membrane. It is found in the secreted. The protein localises to the extracellular space. Cell surface proteoglycan that bears heparan sulfate. The sequence is that of Glypican-5 (Gpc5) from Mus musculus (Mouse).